Reading from the N-terminus, the 601-residue chain is Glutathione-regulated potassium-efflux system protein KefB (601 aa).

13 helical membrane passes run 4-24 (SDLL…VPLA), 29-49 (IGAV…GLGF), 55-75 (EILH…GLEL), 87-107 (IFGV…GLLM), 115-135 (AAVV…LQLM), 152-172 (VLLF…LLAG), 177-197 (HVNW…LIGG), 207-227 (FIAS…LVLG), 230-250 (LFME…GVLL), 268-288 (GLLL…GVLY), 291-311 (LLWV…VLYL), 326-346 (FAGV…LPAS), and 356-376 (ALLL…MKGI). One can recognise an RCK N-terminal domain in the interval 400-519 (KPQVIIVGFG…AGVTQFSRET (120 aa)).

Belongs to the monovalent cation:proton antiporter 2 (CPA2) transporter (TC 2.A.37) family. KefB subfamily. Interacts with the regulatory subunit KefG.

It is found in the cell inner membrane. Functionally, pore-forming subunit of a potassium efflux system that confers protection against electrophiles. Catalyzes K(+)/H(+) antiport. This chain is Glutathione-regulated potassium-efflux system protein KefB, found in Klebsiella pneumoniae subsp. pneumoniae (strain ATCC 700721 / MGH 78578).